Here is a 175-residue protein sequence, read N- to C-terminus: Alpha-crystallin B chain (175 aa).

Methionine 1 carries the post-translational modification N-acetylmethionine. At serine 19 the chain carries Phosphoserine. O-linked (GlcNAc) serine glycosylation is present at serine 41. Residues serine 45 and serine 59 each carry the phosphoserine modification. The sHSP domain maps to 56–164 (RAPSWFDTGL…PERTIPITRE (109 aa)). Histidine 83 provides a ligand contact to Zn(2+). Lysine 92 bears the N6-acetyllysine mark. The Zn(2+) site is built by histidine 104, glutamate 106, histidine 111, and histidine 119. Residues 142–175 (VLTVNGPRKQVSGPERTIPITREEKPAVTAAPKK) form a disordered region. The residue at position 166 (lysine 166) is an N6-acetyllysine. A glycan (O-linked (GlcNAc) threonine) is linked at threonine 170.

The protein belongs to the small heat shock protein (HSP20) family. Heteromer composed of three CRYAA and one CRYAB subunits. Aggregates with homologous proteins, including the small heat shock protein HSPB1, to form large heteromeric complexes. Inter-subunit bridging via zinc ions enhances stability, which is crucial as there is no protein turn over in the lens. Interacts with HSPBAP1 and TTN/titin. Interacts with TMEM109; in the cellular response to DNA damage. Interacts with DES; binds rapidly during early stages of DES filament assembly and a reduced binding seen in the later stages. Interacts with TMED10; the interaction mediates the translocation from the cytoplasm into the ERGIC (endoplasmic reticulum-Golgi intermediate compartment) and thereby secretion. Interacts with ATP6V1A and with MTOR, forming a ternary complex.

Its subcellular location is the cytoplasm. The protein resides in the nucleus. The protein localises to the secreted. It localises to the lysosome. Its function is as follows. May contribute to the transparency and refractive index of the lens. Has chaperone-like activity, preventing aggregation of various proteins under a wide range of stress conditions. In lens epithelial cells, stabilizes the ATP6V1A protein, preventing its degradation by the proteasome. The polypeptide is Alpha-crystallin B chain (CRYAB) (Macaca fascicularis (Crab-eating macaque)).